The chain runs to 460 residues: Nuclear transport factor 2 (460 aa).

The NTF2 domain occupies 15–131; sequence VGRAFVEQYY…YFVLNDVFRF (117 aa). Disordered stretches follow at residues 207–226, 238–289, and 361–460; these read EPPTQISHNEILSVPQGDAP, KSSP…VDVE, and RQAV…GGSS. The RRM domain occupies 293–370; sequence HSIYVRNLPF…RQAVVEEKKT (78 aa). Gly residues predominate over residues 373–382; that stretch reads RGGGNNGGSR. Over residues 383–394 the composition is skewed to low complexity; the sequence is GRYFSGRGSFRN. Composition is skewed to gly residues over residues 399–416 and 450–460; these read GGRGGGGRGGYGRGGGEF and GRGGARGGGSS.

Interacts with MBD6.

Its subcellular location is the cytoplasm. It is found in the nucleus. In terms of biological role, involved in RNA-directed DNA methylation (RdDM). In Arabidopsis thaliana (Mouse-ear cress), this protein is Nuclear transport factor 2.